The chain runs to 184 residues: ATP synthase subunit b, chloroplastic (184 aa).

The chain crosses the membrane as a helical span at residues 27–49; it reads LATNPINLSVVFGVLIFFGKGVL.

It belongs to the ATPase B chain family. In terms of assembly, F-type ATPases have 2 components, F(1) - the catalytic core - and F(0) - the membrane proton channel. F(1) has five subunits: alpha(3), beta(3), gamma(1), delta(1), epsilon(1). F(0) has four main subunits: a(1), b(1), b'(1) and c(10-14). The alpha and beta chains form an alternating ring which encloses part of the gamma chain. F(1) is attached to F(0) by a central stalk formed by the gamma and epsilon chains, while a peripheral stalk is formed by the delta, b and b' chains.

It localises to the plastid. Its subcellular location is the chloroplast thylakoid membrane. Functionally, f(1)F(0) ATP synthase produces ATP from ADP in the presence of a proton or sodium gradient. F-type ATPases consist of two structural domains, F(1) containing the extramembraneous catalytic core and F(0) containing the membrane proton channel, linked together by a central stalk and a peripheral stalk. During catalysis, ATP synthesis in the catalytic domain of F(1) is coupled via a rotary mechanism of the central stalk subunits to proton translocation. Component of the F(0) channel, it forms part of the peripheral stalk, linking F(1) to F(0). This Draba nemorosa (Woodland whitlowgrass) protein is ATP synthase subunit b, chloroplastic.